Here is a 360-residue protein sequence, read N- to C-terminus: MLNRTIAKRTLATAAQAERTLPKKYGGRFTVTLIPGDGVGKEITDSVRTIFEAENIPIDWETINIKQTDHKEGVYEAVESLKRNKIGLKGLWHTPADQTGHGSLNVALRKQLDIYANVALFKSLKGVKTRIPDIDLIVIRENTEGEFSGLEHESVPGVVESLKVMTRPKTERIARFAFDFAKKYNRKSVTAVHKANIMKLGDGLFRNIITEIGQKEYPDIDVSSIIVDNASMQAVAKPHQFDVLVTPSMYGTILGNIGAALIGGPGLVAGANFGRDYAVFEPGSRHVGLDIKGQNVANPTAMILSSTLMLNHLGLNEYATRISKAVHETIAEGKHTTRDIGGSSSTTDFTNEIINKLSTM.

Residues 1 to 11 (MLNRTIAKRTL) constitute a mitochondrion transit peptide. The substrate site is built by Arg-109, Arg-140, and Asp-228. Asp-228 lines the Mg(2+) pocket.

This sequence belongs to the isocitrate and isopropylmalate dehydrogenases family. In terms of assembly, octamer of two non-identical subunits IDH1 and IDH2. It depends on Mg(2+) as a cofactor. Mn(2+) is required as a cofactor.

It localises to the mitochondrion. The enzyme catalyses D-threo-isocitrate + NAD(+) = 2-oxoglutarate + CO2 + NADH. Its activity is regulated as follows. Allosterically regulated by several compounds including AMP, NAD(+), and citrate. Functionally, performs an essential role in the oxidative function of the citric acid cycle. Also binds RNA; specifically to the 5'-untranslated leaders of mitochondrial mRNAs. The chain is Isocitrate dehydrogenase [NAD] subunit 1, mitochondrial (IDH1) from Saccharomyces cerevisiae (strain ATCC 204508 / S288c) (Baker's yeast).